The primary structure comprises 180 residues: Large ribosomal subunit protein uL5c (180 aa).

This sequence belongs to the universal ribosomal protein uL5 family. Part of the 50S ribosomal subunit; contacts the 5S rRNA.

It is found in the plastid. It localises to the chloroplast. Functionally, binds 5S rRNA, forms part of the central protuberance of the 50S subunit. The protein is Large ribosomal subunit protein uL5c (rpl5) of Tetradesmus obliquus (Green alga).